A 251-amino-acid chain; its full sequence is Hydroxyacylglutathione hydrolase (251 aa).

Zn(2+) contacts are provided by His53, His55, Asp57, His58, His110, Asp127, and His165.

Belongs to the metallo-beta-lactamase superfamily. Glyoxalase II family. As to quaternary structure, monomer. Zn(2+) serves as cofactor.

The enzyme catalyses an S-(2-hydroxyacyl)glutathione + H2O = a 2-hydroxy carboxylate + glutathione + H(+). It functions in the pathway secondary metabolite metabolism; methylglyoxal degradation; (R)-lactate from methylglyoxal: step 2/2. Functionally, thiolesterase that catalyzes the hydrolysis of S-D-lactoyl-glutathione to form glutathione and D-lactic acid. The chain is Hydroxyacylglutathione hydrolase from Yersinia enterocolitica serotype O:8 / biotype 1B (strain NCTC 13174 / 8081).